The chain runs to 523 residues: Probable DNA ligase (523 aa).

Glu210 is an ATP binding site. Lys212 acts as the N6-AMP-lysine intermediate in catalysis. Positions 217, 232, 261, 317, 388, and 394 each coordinate ATP.

It belongs to the ATP-dependent DNA ligase family. It depends on Mg(2+) as a cofactor.

It carries out the reaction ATP + (deoxyribonucleotide)n-3'-hydroxyl + 5'-phospho-(deoxyribonucleotide)m = (deoxyribonucleotide)n+m + AMP + diphosphate.. Its function is as follows. DNA ligase that seals nicks in double-stranded DNA during DNA replication, DNA recombination and DNA repair. This is Probable DNA ligase from Nocardia farcinica (strain IFM 10152).